The following is a 432-amino-acid chain: Amino-acid acetyltransferase (432 aa).

One can recognise an N-acetyltransferase domain in the interval 286–425 (EKLREATIED…ASLYNYQRQS (140 aa)).

This sequence belongs to the acetyltransferase family. ArgA subfamily.

The protein resides in the cytoplasm. The catalysed reaction is L-glutamate + acetyl-CoA = N-acetyl-L-glutamate + CoA + H(+). Its pathway is amino-acid biosynthesis; L-arginine biosynthesis; N(2)-acetyl-L-ornithine from L-glutamate: step 1/4. This chain is Amino-acid acetyltransferase, found in Azotobacter vinelandii (strain DJ / ATCC BAA-1303).